Here is an 84-residue protein sequence, read N- to C-terminus: uncharacterized protein (84 aa).

This is an uncharacterized protein from Azorhizobium caulinodans (strain ATCC 43989 / DSM 5975 / JCM 20966 / LMG 6465 / NBRC 14845 / NCIMB 13405 / ORS 571).